Reading from the N-terminus, the 427-residue chain is Beta-porphyranase D (427 aa).

An N-terminal signal peptide occupies residues 1–19; it reads MILKQAILTLVLVNANLFA. The segment at 23–45 is disordered; the sequence is PKTYSSTDKETRQGPPKPPMGKR. Positions 32–308 constitute a GH16 domain; sequence ETRQGPPKPP…WVRAYRLVDV (277 aa). Residues tryptophan 73, arginine 76, glutamate 168, glutamate 173, and glutamate 272 each contribute to the substrate site. Catalysis depends on glutamate 168, which acts as the Nucleophile. Glutamate 173 functions as the Proton donor in the catalytic mechanism.

The protein belongs to the glycosyl hydrolase 16 family.

It is found in the periplasm. It carries out the reaction Hydrolysis of beta-D-galactopyranose-(1-&gt;4)-alpha-L-galactopyranose-6-sulfate linkages in porphyran.. In terms of biological role, cleaves the sulfated polysaccharide porphyran at the (1-&gt;4) linkages between beta-D-galactopyranose and alpha-L-galactopyranose-6-sulfate, forming mostly the disaccharide alpha-L-galactopyranose-6-sulfate-(1-&gt;3)-beta-D-galactose. The polypeptide is Beta-porphyranase D (porD) (Zobellia galactanivorans (strain DSM 12802 / CCUG 47099 / CIP 106680 / NCIMB 13871 / Dsij)).